The following is a 760-amino-acid chain: Xaa-Pro dipeptidyl-peptidase (760 aa).

Residues Ser-349, Asp-469, and His-499 each act as charge relay system in the active site.

It belongs to the peptidase S15 family. Homodimer.

The protein localises to the cytoplasm. The catalysed reaction is Hydrolyzes Xaa-Pro-|- bonds to release unblocked, N-terminal dipeptides from substrates including Ala-Pro-|-p-nitroanilide and (sequentially) Tyr-Pro-|-Phe-Pro-|-Gly-Pro-|-Ile.. Removes N-terminal dipeptides sequentially from polypeptides having unsubstituted N-termini provided that the penultimate residue is proline. This Streptococcus pyogenes serotype M4 (strain MGAS10750) protein is Xaa-Pro dipeptidyl-peptidase.